The primary structure comprises 199 residues: GTP-binding protein Di-Ras2 (199 aa).

GTP-binding positions include 14–21 (GAGGVGKS), 33–39 (RESYIPT), 61–65 (DTTGS), and 121–124 (NKCD). Ser35 carries the phosphoserine modification. Residues 36–44 (YIPTVEDTY) carry the Effector region motif. Ser126 carries the phosphoserine modification. 152–153 (AK) contacts GTP. Cys196 is modified (cysteine methyl ester). Cys196 carries the S-geranylgeranyl cysteine lipid modification. Positions 197-199 (VIM) are cleaved as a propeptide — removed in mature form.

It belongs to the small GTPase superfamily. Di-Ras family. Post-translationally, ubiquitinated by the ECS(ASB11) complex via 'Lys-11'-linked ubiquitin chains, leading to its degradation by the proteasome.

It localises to the cell membrane. It catalyses the reaction GTP + H2O = GDP + phosphate + H(+). Its function is as follows. Displays low GTPase activity and exists predominantly in the GTP-bound form. The sequence is that of GTP-binding protein Di-Ras2 (DIRAS2) from Macaca fascicularis (Crab-eating macaque).